Consider the following 245-residue polypeptide: Ribonuclease PH (245 aa).

Residues arginine 87 and 125-127 (GTR) contribute to the phosphate site.

Belongs to the RNase PH family. In terms of assembly, homohexameric ring arranged as a trimer of dimers.

It carries out the reaction tRNA(n+1) + phosphate = tRNA(n) + a ribonucleoside 5'-diphosphate. Its function is as follows. Phosphorolytic 3'-5' exoribonuclease that plays an important role in tRNA 3'-end maturation. Removes nucleotide residues following the 3'-CCA terminus of tRNAs; can also add nucleotides to the ends of RNA molecules by using nucleoside diphosphates as substrates, but this may not be physiologically important. Probably plays a role in initiation of 16S rRNA degradation (leading to ribosome degradation) during starvation. The sequence is that of Ribonuclease PH from Streptomyces coelicolor (strain ATCC BAA-471 / A3(2) / M145).